A 443-amino-acid chain; its full sequence is MEQLWVPSLPILGGRILPMLRHYCGFGSHHPLTWRSLQITGRKQKHNGCWIAYCLPSHNGTSISDTNGVRKDLALPDNLLRDAHILYCTSPAMGHNKEAHPETNKRVPAIVDALEKLELTSKHRGSQVLEIQDFQPASLDDIALVHSRSYITGLEKAMSRASDEGLIFIEGTGPTYATQTTFQECLLSAGAGITLVDSVVAASKLGPKPPLGFALVRPPGHHAVPEGPMGFCVFGNIAVAARYAQNQHGLKRVMIIDFDVHHGNGTCDAFYEDPDIFFLSTHQLGSYPGTGKIHQVGQGNGEGTTLNLPLPGGSGDYAMRCAFDEVIAPAAQRFKPDIILVSAGYDAHALDPLAGLQFTTGTFYMLAARIREVAAELCGGRCVFFLEGGYNLESLSSSVADTFRAFLGEPSLAARFDDPAMLYEEPTRKIREAIDKAKHLHSL.

The N-terminal 65 residues, 1–65 (MEQLWVPSLP…PSHNGTSISD (65 aa)), are a transit peptide targeting the chloroplast. Residues 82-412 (DAHILYCTSP…FRAFLGEPSL (331 aa)) are histone deacetylase. H222 acts as the Proton donor/acceptor in catalysis. 3 residues coordinate Zn(2+): D259, H261, and D346.

The protein belongs to the histone deacetylase family. Zn(2+) is required as a cofactor. Expressed in leaves. Expressed in coleoptiles, leaves, flag leaves and flowers. Expressed at low levels in roots.

It localises to the plastid. It is found in the chloroplast. The protein localises to the mitochondrion. It carries out the reaction N-acetylserotonin + H2O = serotonin + acetate. The enzyme catalyses N-acetyltyramine + H2O = tyramine + acetate. It catalyses the reaction N-acetyltryptamine + H2O = tryptamine + acetate. The catalysed reaction is melatonin + H2O = 5-methoxytryptamine + acetate. Its activity is regulated as follows. The activity of this enzyme is not inhibited by butyrate, a well-known histone deacetylase inhibitor. In terms of biological role, involved in the regulation of melatonin biosynthesis by catalyzing the deacetylation of N-acetylserotonin to produce serotonin. N-acetylserotonin is methylated by acetylserotonin O-methyltransferase (ASMT) to produce melatonin (N-acetyl-5-methoxytryptamine). Deacetylates melatonin to produce 5-methoxytryptamine. In vitro, deacetylates N-acetyltyramine and N-acetyltryptamine to produce tyramine and tryptamine, respectively. The polypeptide is Histone deacetylase 10, chloroplastic (Oryza sativa subsp. japonica (Rice)).